Here is a 238-residue protein sequence, read N- to C-terminus: MNARAAAVAELERRIGYVFTDRDLLERALTHASVGDGARAVRHNERLEFLGDRVLNLCAAERLMALDPDAREGEMSRLLASLVNYHACARAAKRAGLQEALRLSASATKVGARKSDAVLGDACEALIAALYIDGGLETARAFFLKFWDEEFARLDEPRAKDPKTQLQEWVQGMGLPLPTYEIVSQEGPPHAPSFTVEVQVAGFGAERGEGRSRQAAEKAAAQCMLLKREGPEPGKVGE.

The 128-residue stretch at 8 to 135 (VAELERRIGY…LIAALYIDGG (128 aa)) folds into the RNase III domain. E48 provides a ligand contact to Mg(2+). D52 is an active-site residue. 2 residues coordinate Mg(2+): D121 and E124. The active site involves E124. The DRBM domain maps to 161-230 (DPKTQLQEWV…AQCMLLKREG (70 aa)).

This sequence belongs to the ribonuclease III family. As to quaternary structure, homodimer. Mg(2+) is required as a cofactor.

The protein localises to the cytoplasm. The catalysed reaction is Endonucleolytic cleavage to 5'-phosphomonoester.. Functionally, digests double-stranded RNA. Involved in the processing of primary rRNA transcript to yield the immediate precursors to the large and small rRNAs (23S and 16S). Processes some mRNAs, and tRNAs when they are encoded in the rRNA operon. Processes pre-crRNA and tracrRNA of type II CRISPR loci if present in the organism. The sequence is that of Ribonuclease 3 from Phenylobacterium zucineum (strain HLK1).